The chain runs to 205 residues: MKTLCVLSIFLALLGGLCTSSTTSTTATSNGTTSTLNTTVSSVASTSTPSTESTTTTTPTTTNSSASSTSVTVASTATTSPQTNSTTSLTSPLSSTFSSTSANVSSSTTTTTSSTTKSTSSTKPKTSKNNPKTQEAGAEAAVMISLGILYLFILLLIIFVIILICFIRRRQHHQHGGGGGGQGGPMIPLDVISLESGLGESWSSE.

The signal sequence occupies residues 1 to 19 (MKTLCVLSIFLALLGGLCT). The span at 40–133 (VSSVASTSTP…PKTSKNNPKT (94 aa)) shows a compositional bias: low complexity. The tract at residues 40 to 135 (VSSVASTSTP…TSKNNPKTQE (96 aa)) is disordered. Residues 147-167 (GILYLFILLLIIFVIILICFI) form a helical membrane-spanning segment.

The protein resides in the host membrane. This is an uncharacterized protein from Equine herpesvirus 2 (strain 86/87) (EHV-2).